We begin with the raw amino-acid sequence, 343 residues long: Galactoside alpha-(1,2)-fucosyltransferase 2 (343 aa).

Topologically, residues 1 to 14 (MLVVQMPFSFPVAH) are cytoplasmic. Residues 15–28 (FILFVFTVSTIFHI) form a helical; Signal-anchor for type II membrane protein membrane-spanning segment. At 29–343 (QQRLAKIQAM…AADLSPLLKH (315 aa)) the chain is on the lumenal side. Residues Asn188, Asn282, and Asn308 are each glycosylated (N-linked (GlcNAc...) asparagine).

This sequence belongs to the glycosyltransferase 11 family.

Its subcellular location is the golgi apparatus. The protein localises to the golgi stack membrane. The catalysed reaction is a beta-D-galactosyl-(1-&gt;3)-N-acetyl-beta-D-glucosaminyl derivative + GDP-beta-L-fucose = an alpha-L-Fuc-(1-&gt;2)-beta-D-Gal-(1-&gt;3)-beta-D-GlcNAc derivative + GDP + H(+). It catalyses the reaction a beta-D-galactosyl-(1-&gt;4)-N-acetyl-beta-D-glucosaminyl derivative + GDP-beta-L-fucose = an alpha-L-Fuc-(1-&gt;2)-beta-D-Gal-(1-&gt;4)-beta-D-GlcNAc derivative + GDP + H(+). The enzyme catalyses a neolactoside nLc4Cer + GDP-beta-L-fucose = a neolactoside IV(2)-alpha-Fuc-nLc4Cer + GDP + H(+). It carries out the reaction a neolactoside nLc4Cer(d18:1(4E)) + GDP-beta-L-fucose = a neolactoside IV(2)-alpha-Fuc-nLc4Cer(d18:1(4E)) + GDP + H(+). The catalysed reaction is a ganglioside GM1 + GDP-beta-L-fucose = a ganglioside Fuc-GM1 + GDP + H(+). It catalyses the reaction a ganglioside GA1 + GDP-beta-L-fucose = a ganglioside Fuc-GA1 + GDP + H(+). The enzyme catalyses Lc4Cer + GDP-beta-L-fucose = alpha-L-fucosyl-(1-&gt;2)-beta-D-galactosyl-(1-&gt;3)-N-acetyl-beta-D-glucosaminyl-(1-&gt;3)-beta-D-galactosyl-(1-&gt;4)-beta-D-glucosyl-(1&lt;-&gt;1')-ceramide + GDP + H(+). It carries out the reaction a beta-D-Gal-(1-&gt;3)-beta-D-GlcNAc-(1-&gt;3)-beta-D-Gal-(1-&gt;4)-beta-D-Glc-(1&lt;-&gt;1')-Cer(d18:1(4E)) + GDP-beta-L-fucose = alpha-L-fucosyl-(1-&gt;2)- beta-D-galactosyl-(1-&gt;3)-N-acetyl-beta-D-glucosaminyl-(1-&gt;3)-beta-D-galactosyl-(1-&gt;4)-beta-D-glucosyl-(1&lt;-&gt;1')-N-acylsphing-4-enine + GDP + H(+). The catalysed reaction is a ganglioside GD1b + GDP-beta-L-fucose = a ganglioside Fuc-GD1b + GDP + H(+). It catalyses the reaction a ganglioside GM1 (d18:1(4E)) + GDP-beta-L-fucose = a ganglioside Fuc-GM1 (d18:1(4E)) + GDP + H(+). The enzyme catalyses a globoside GalGb4Cer (d18:1(4E)) + GDP-beta-L-fucose = a globoside Globo-H (d18:1(4E)) + GDP + H(+). It carries out the reaction a lactoside III(4)-a-Fuc-Lc4Cer + GDP-beta-L-fucose = a lactoside IV(2),III(4)-a-[Fuc]2-Lc4Cer + GDP + H(+). The catalysed reaction is beta-D-galactosyl-(1-&gt;3)-N-acetyl-D-galactosamine + GDP-beta-L-fucose = alpha-L-fucosyl-(1-&gt;2)-beta-D-galactosyl-(1-&gt;3)-N-acetyl-D-galactosamine + GDP + H(+). It functions in the pathway protein modification; protein glycosylation. Functionally, catalyzes the transfer of L-fucose, from a guanosine diphosphate-beta-L-fucose, to the terminal galactose on both O- and N-linked glycans chains of cell surface glycoproteins and glycolipids and the resulting epitope regulates several processes such as cell-cell interaction including host-microbe interaction, cell surface expression and cell proliferation. Preferentially fucosylates gangliosides GA1 and GM1 in the antrum, cecum and colon and in the female reproductive organs. Fucosylated host glycoproteins or glycolipids mediate interaction with intestinal microbiota influencing its composition. Creates a soluble precursor oligosaccharide FuC-alpha ((1,2)Galbeta-) called the H antigen which is an essential substrate for the final step in the soluble ABO blood group antigen synthesis pathway. The chain is Galactoside alpha-(1,2)-fucosyltransferase 2 from Pongo pygmaeus (Bornean orangutan).